Consider the following 807-residue polypeptide: Glycerol-3-phosphate acyltransferase (807 aa).

The HXXXXD motif signature appears at 305–310; that stretch reads CHRSHM.

This sequence belongs to the GPAT/DAPAT family.

The protein resides in the cell inner membrane. The catalysed reaction is sn-glycerol 3-phosphate + an acyl-CoA = a 1-acyl-sn-glycero-3-phosphate + CoA. It functions in the pathway phospholipid metabolism; CDP-diacylglycerol biosynthesis; CDP-diacylglycerol from sn-glycerol 3-phosphate: step 1/3. The chain is Glycerol-3-phosphate acyltransferase from Aliivibrio salmonicida (strain LFI1238) (Vibrio salmonicida (strain LFI1238)).